Reading from the N-terminus, the 458-residue chain is MTRGAWMCRQYDDGLKIWLAAPRENEKPFIDSERAQKWRLSLASLLFFTVLLSDHLWFCAEAKLTRARDKEHQQQQRQQQQQQQQQRQRQQQQQQRRQQEPSWPALLASMGESSPAAQAHRLLSASSSPTLPPSPGDGGGGGGKGNRGKDDRGKALFLGNSAKPVWRLETCYPQGASSGQCFTVENADAVCARNWSRGAAGGDGQEVRSKHPTPLWNLSDFYLSFCNSYTLWELFSGLSSPNTLNCSLDVVLKEGGEMTTCRQCVEAYQDYDHHAQEKYEEFESVLHKYLQSEEYSVKSCPEDCKIVYKAWLCSQYFEVTQFNCRKTIPCKQYCLEVQTRCPFILPDNDEVIYGGLSSFICTGLYETFLTNDEPECCDVRREEKSNNPSKGTVEKSGSCHRTSLTVSSATRLCNSRLKLCVLVLILLHTVLTASAAQNTAGLSFGGINTLEENSTNEE.

The helical transmembrane segment at 40–60 (LSLASLLFFTVLLSDHLWFCA) threads the bilayer. The tract at residues 70–155 (KEHQQQQRQQ…NRGKDDRGKA (86 aa)) is disordered. A compositionally biased stretch (low complexity) spans 75 to 96 (QQRQQQQQQQQQRQRQQQQQQR). Gly residues predominate over residues 136-145 (GDGGGGGGKG). Intrachain disulfides connect Cys-191–Cys-261, Cys-226–Cys-313, Cys-246–Cys-261, Cys-304–Cys-341, Cys-324–Cys-377, Cys-330–Cys-376, and Cys-334–Cys-361. Asn-217 is a glycosylation site (N-linked (GlcNAc...) asparagine). The helical transmembrane segment at 417–437 (LKLCVLVLILLHTVLTASAAQ) threads the bilayer.

This sequence belongs to the NALF family. As to quaternary structure, component of the NALCN channel complex. NALCN complex consists of NALCN and auxiliary subunits, UNC79, UNC80 and NACL1. These auxiliary subunits are essential for the NALCN channel function.

The protein localises to the cell membrane. Functionally, auxillary component of the NALCN sodium channel complex, a channel that regulates the resting membrane potential and controls neuronal excitability. The chain is NALCN channel auxiliary factor 1 from Homo sapiens (Human).